Here is a 76-residue protein sequence, read N- to C-terminus: UPF0352 protein PC1_1633 (76 aa).

Belongs to the UPF0352 family.

The chain is UPF0352 protein PC1_1633 from Pectobacterium carotovorum subsp. carotovorum (strain PC1).